The following is a 457-amino-acid chain: Methanethiol oxidase (457 aa).

The protein belongs to the selenium-binding protein family.

It localises to the nucleus. Its subcellular location is the cytoplasm. The protein localises to the cytosol. The protein resides in the membrane. The enzyme catalyses methanethiol + O2 + H2O = hydrogen sulfide + formaldehyde + H2O2 + H(+). It functions in the pathway organosulfur degradation. Its function is as follows. Catalyzes the oxidation of methanethiol, an organosulfur compound known to be produced in substantial amounts by gut bacteria. Selenium-binding protein which may be involved in the sensing of reactive xenobiotics in the cytoplasm. May be involved in intra-Golgi protein transport. This chain is Methanethiol oxidase (selenbp1), found in Danio rerio (Zebrafish).